Reading from the N-terminus, the 185-residue chain is Meiotically up-regulated gene 5 protein (185 aa).

The protein localises to the cytoplasm. Required for correct meiotic chromosome segregation. The polypeptide is Meiotically up-regulated gene 5 protein (mug5) (Schizosaccharomyces pombe (strain 972 / ATCC 24843) (Fission yeast)).